The chain runs to 443 residues: ATP-dependent protease ATPase subunit HslU (443 aa).

ATP is bound by residues Ile-18, Gly-60–Glu-65, Asp-256, Glu-321, and Arg-393.

This sequence belongs to the ClpX chaperone family. HslU subfamily. A double ring-shaped homohexamer of HslV is capped on each side by a ring-shaped HslU homohexamer. The assembly of the HslU/HslV complex is dependent on binding of ATP.

It is found in the cytoplasm. ATPase subunit of a proteasome-like degradation complex; this subunit has chaperone activity. The binding of ATP and its subsequent hydrolysis by HslU are essential for unfolding of protein substrates subsequently hydrolyzed by HslV. HslU recognizes the N-terminal part of its protein substrates and unfolds these before they are guided to HslV for hydrolysis. This Salmonella arizonae (strain ATCC BAA-731 / CDC346-86 / RSK2980) protein is ATP-dependent protease ATPase subunit HslU.